The primary structure comprises 137 residues: Large ribosomal subunit protein eL28 (137 aa).

At Ser2 the chain carries N-acetylserine. Residues Lys58 and Lys65 each participate in a glycyl lysine isopeptide (Lys-Gly) (interchain with G-Cter in SUMO2) cross-link. Phosphoserine is present on Ser115.

Belongs to the eukaryotic ribosomal protein eL28 family. As to quaternary structure, component of the large ribosomal subunit.

The protein resides in the cytoplasm. Component of the large ribosomal subunit. The ribosome is a large ribonucleoprotein complex responsible for the synthesis of proteins in the cell. The polypeptide is Large ribosomal subunit protein eL28 (RPL28) (Homo sapiens (Human)).